Consider the following 154-residue polypeptide: Prefoldin subunit 2 (154 aa).

2 disordered regions span residues 1 to 20 (MADSSGRVGKSGGSGAGKGA) and 126 to 154 (LMGEDEKPAAKENSEGAGAKASSAGVLVS). Residues 9 to 18 (GKSGGSGAGK) show a composition bias toward gly residues. Positions 126–139 (LMGEDEKPAAKENS) are enriched in basic and acidic residues. Positions 140–154 (EGAGAKASSAGVLVS) are enriched in low complexity.

This sequence belongs to the prefoldin subunit beta family. As to quaternary structure, heterohexamer of two PFD-alpha type and four PFD-beta type subunits. Component of the PAQosome complex which is responsible for the biogenesis of several protein complexes and which consists of R2TP complex members RUVBL1, RUVBL2, RPAP3 and PIH1D1, URI complex members PFDN2, PFDN6, PDRG1, UXT and URI1 as well as ASDURF, POLR2E and DNAAF10/WDR92. Interacts with URI1; the interaction is phosphorylation-dependent and occurs in a growth-dependent manner.

The protein localises to the nucleus. Its subcellular location is the cytoplasm. It is found in the mitochondrion. Binds specifically to cytosolic chaperonin (c-CPN) and transfers target proteins to it. Binds to nascent polypeptide chain and promotes folding in an environment in which there are many competing pathways for nonnative proteins. The sequence is that of Prefoldin subunit 2 (Pfdn2) from Mus musculus (Mouse).